The sequence spans 215 residues: Beta-crystallin A3-2 (215 aa).

Residues 1 to 30 (MEIPAIQTEREDITSEKMAQINPLPVPLGP) are N-terminal arm. Beta/gamma crystallin 'Greek key' domains lie at 31-70 (WKIT…KVEC) and 71-117 (GAWI…RPIC). Residues 118-123 (SANHEE) form a connecting peptide region. Beta/gamma crystallin 'Greek key' domains lie at 124–165 (SKLV…KVQC) and 166–214 (GAWV…RRIQ).

This sequence belongs to the beta/gamma-crystallin family. Homo/heterodimer, or complexes of higher-order. The structure of beta-crystallin oligomers seems to be stabilized through interactions between the N-terminal arms. Post-translationally, the N-terminus is blocked.

Its function is as follows. Crystallins are the dominant structural components of the vertebrate eye lens. The chain is Beta-crystallin A3-2 from Aquarana catesbeiana (American bullfrog).